The sequence spans 194 residues: 3-isopropylmalate dehydratase small subunit (194 aa).

The protein belongs to the LeuD family. LeuD type 1 subfamily. As to quaternary structure, heterodimer of LeuC and LeuD.

The catalysed reaction is (2R,3S)-3-isopropylmalate = (2S)-2-isopropylmalate. The protein operates within amino-acid biosynthesis; L-leucine biosynthesis; L-leucine from 3-methyl-2-oxobutanoate: step 2/4. Its function is as follows. Catalyzes the isomerization between 2-isopropylmalate and 3-isopropylmalate, via the formation of 2-isopropylmaleate. The polypeptide is 3-isopropylmalate dehydratase small subunit (Limosilactobacillus fermentum (strain NBRC 3956 / LMG 18251) (Lactobacillus fermentum)).